The primary structure comprises 353 residues: Vomeronasal type-1 receptor 1 (353 aa).

At Met-1 to Thr-56 the chain is on the extracellular side. The helical transmembrane segment at Gly-57–Gly-77 threads the bilayer. Over His-78–Asp-84 the chain is Cytoplasmic. A helical transmembrane segment spans residues Leu-85–Gln-105. Topologically, residues Thr-106–Thr-132 are extracellular. The N-linked (GlcNAc...) asparagine glycan is linked to Asn-117. Residues Arg-133–Ser-153 form a helical membrane-spanning segment. Topologically, residues Ile-154–Asp-169 are cytoplasmic. The chain crosses the membrane as a helical span at residues Phe-170–Val-190. Topologically, residues Asn-191–Ser-226 are extracellular. An N-linked (GlcNAc...) asparagine glycan is attached at Asn-198. The helical transmembrane segment at Pro-227–Tyr-247 threads the bilayer. The Cytoplasmic portion of the chain corresponds to Arg-248–Thr-274. A helical membrane pass occupies residues Ile-275–Trp-295. At Thr-296 to Gly-303 the chain is on the extracellular side. A helical transmembrane segment spans residues Gln-304–Val-324. Topologically, residues Leu-325–Pro-353 are cytoplasmic.

Belongs to the G-protein coupled receptor 1 family. As to expression, expressed in the olfactory mucosa, very low expression in brain, lung and kidney.

The protein resides in the cell membrane. Functionally, putative pheromone receptor. The chain is Vomeronasal type-1 receptor 1 (VN1R1) from Homo sapiens (Human).